Reading from the N-terminus, the 228-residue chain is Ribosomal RNA small subunit methyltransferase G (228 aa).

Residues Gly92, Phe97, 115 to 117, 143 to 144, and Arg156 contribute to the S-adenosyl-L-methionine site; these read EAT and AE.

It belongs to the methyltransferase superfamily. RNA methyltransferase RsmG family.

The protein localises to the cytoplasm. Functionally, specifically methylates the N7 position of a guanine in 16S rRNA. This chain is Ribosomal RNA small subunit methyltransferase G, found in Thermosynechococcus vestitus (strain NIES-2133 / IAM M-273 / BP-1).